A 323-amino-acid chain; its full sequence is tRNA dimethylallyltransferase (323 aa).

Position 12–19 (12–19 (GPTAAGKT)) interacts with ATP. 14 to 19 (TAAGKT) lines the substrate pocket. Interaction with substrate tRNA regions lie at residues 37–40 (DSAL) and 161–165 (QRLSR).

The protein belongs to the IPP transferase family. In terms of assembly, monomer. Mg(2+) is required as a cofactor.

The catalysed reaction is adenosine(37) in tRNA + dimethylallyl diphosphate = N(6)-dimethylallyladenosine(37) in tRNA + diphosphate. Its function is as follows. Catalyzes the transfer of a dimethylallyl group onto the adenine at position 37 in tRNAs that read codons beginning with uridine, leading to the formation of N6-(dimethylallyl)adenosine (i(6)A). This is tRNA dimethylallyltransferase from Pseudomonas fluorescens (strain SBW25).